The primary structure comprises 582 residues: WD repeat-containing protein JIP5 (582 aa).

5 WD repeats span residues 27–68 (KYPE…EAQS), 125–168 (RHKG…VLSK), 177–216 (DKNDAITKLVHSTSHPFLLSGTENGDVLVYDSNNMASNQL), 265–310 (DQED…LMDQ), and 373–410 (GPADEVGILDIDYDYRLISAGMDSLKIWSNQEETLNSD). Disordered stretches follow at residues 405 to 496 (ETLN…DTEL) and 531 to 582 (TKEQ…FDDL). Composition is skewed to acidic residues over residues 410–438 (DSDDSDSDDSDSDIGSNDSEDSDSDDDDV) and 447–485 (EVNDFSPDSDSETGNDDSDENLEDVADSDSNEDQIENVT). Basic and acidic residues-rich tracts occupy residues 531–540 (TKEQSTKKAD) and 570–582 (QKHEHGIRRFDDL).

The protein belongs to the WD repeat WDR55 family.

The protein resides in the nucleus. It localises to the nucleolus. The protein is WD repeat-containing protein JIP5 (JIP5) of Debaryomyces hansenii (strain ATCC 36239 / CBS 767 / BCRC 21394 / JCM 1990 / NBRC 0083 / IGC 2968) (Yeast).